The chain runs to 1027 residues: MHRASLICRLASPSRINSIRSASSYGNNTISATPLVQQRKQSVAASVKHEPFLNGSSSVYIEQMYETWLENPSSVHTSWDAYFRNVEAGAGPGQAFQAPPSVAYAGSMGVPSAPITSAAPATRLDTNASVQSISDHLKIQLLIRSYQTRGHNIADLDPLGINSADLDDTIPPELELSFYGLGERDLDREFLLPPTTFISEKKSLTLREILQRLKEIYCTSTGVEYMHLNNLEQQDWIRRRFEAPRVTELSHDQKKVLFKRLIRSTKFEEFLAKKWPSEKRFGLEGCEVLIPAIKQVIDSSSTLGVDSFVIGMPHRGRLNVLANVCRQPLATILSQFSTLEPADEGSGDVKYHLGVCIERLNRQSQKNVKIAVVANPSHLEAVDPVVMGKVRAEAFYAGDEKCDRTMAILLHGDAAFAGQGVVLETFNLDDLPSYTTHGAIHIVVNNQIGFTTDPRSSRSSPYCTDVGRVVGCPIFHVNVDDPEAVMHVCNVAADWRKTFKKDVIVDLVCYRRHGHNELDEPMFTQPLMYQRIKQTKTALEKYQEKILNEGVANEQYVKEELTKYGAILEDAYENAQKVTYVRNRDWLDSPWDDFFKKRDPLKLPSTGIEQENIEHIIGKFGSYPEGFNLHRGLERTLKGRQQMLKDNSLDWACGEALAFGSLLKEGIHVRLSGQDVERGTFSHRHHVLHDQKVDQKIYNPLNDLADPQGEYTVCNSSLSEYAVLGFELGYSMVDPNSLVIWEAQFGDFSNTAQCIIDQFVSSGQSKWIRQSGLVMLLPHGYEGMGPEHSSARPERFLQMCNEDDEIDLDKIAFGGTFEAQQLHDTNWIVANCTTPANIYHLLRRQVTMPFRKPAVVFSPKSLLRHPMARSPVEDFQSGSNFQRIIPETGAPSQNPPNVQRLVFCTGKVYYDMVAARKHVGKENDVALVRVEQLSPFPYDLVQQECRKYQGAEIIWAQEEHKNMGAWSFVQPRINSLLSIDGRATKYAGRLPSSSPATGNKYTHMQEQKEMMSKVFGVPKSKLEGFKA.

Thiamine diphosphate contacts are provided by arginine 315, aspartate 413, asparagine 446, isoleucine 448, and glutamine 674. Mg(2+)-binding residues include aspartate 413, asparagine 446, and isoleucine 448.

This sequence belongs to the alpha-ketoglutarate dehydrogenase family. As to quaternary structure, homodimer. Component of the 2-oxoglutarate dehydrogenase complex. Requires thiamine diphosphate as cofactor. Mg(2+) is required as a cofactor.

It localises to the mitochondrion matrix. It carries out the reaction N(6)-[(R)-lipoyl]-L-lysyl-[protein] + 2-oxoglutarate + H(+) = N(6)-[(R)-S(8)-succinyldihydrolipoyl]-L-lysyl-[protein] + CO2. The 2-oxoglutarate dehydrogenase complex catalyzes the overall conversion of 2-oxoglutarate to succinyl-CoA and CO(2). It contains multiple copies of three enzymatic components: 2-oxoglutarate dehydrogenase (E1), dihydrolipoamide succinyltransferase (E2) and lipoamide dehydrogenase (E3). This Caenorhabditis briggsae protein is 2-oxoglutarate dehydrogenase, mitochondrial (ogdh-1).